The chain runs to 132 residues: MPPCKGEFLFMGVMIPMKRERMLTIRVTDDEHARLLERCEGKQLAVWMRRDQRKITQGQCQRFVNTDVGVPQGSQQHPAMQIRNIMVQGADFRVSRLYETRKPKTIHVVAQVADVLQQQSLHVRSRIGDSFC.

This is an uncharacterized protein from Escherichia coli.